Consider the following 438-residue polypeptide: Enolase (438 aa).

Residues His159 and Glu168 each contribute to the substrate site. Catalysis depends on Glu211, which acts as the Proton donor. Positions 246, 297, and 322 each coordinate Mg(2+). Substrate-binding residues include Glu297 and Asp322. Lys347 (proton acceptor) is an active-site residue. Substrate contacts are provided by residues Ser374–Ser377 and Lys398.

The protein belongs to the enolase family. Homodimer. Mg(2+) serves as cofactor.

The protein resides in the cytoplasm. It carries out the reaction (2R)-2-phosphoglycerate = phosphoenolpyruvate + H2O. Its pathway is carbohydrate degradation; glycolysis; pyruvate from D-glyceraldehyde 3-phosphate: step 4/5. The polypeptide is Enolase (ENO) (Alternaria alternata (Alternaria rot fungus)).